A 286-amino-acid chain; its full sequence is 2-hydroxy-6-oxo-6-phenylhexa-2,4-dienoate hydrolase (286 aa).

Residues 42–43 (GG), asparagine 51, asparagine 111, serine 180, and arginine 190 contribute to the substrate site. Residue histidine 265 is the Proton acceptor of the active site. Residue tryptophan 266 participates in substrate binding.

Belongs to the AB hydrolase superfamily. BphD family. As to quaternary structure, homodimer.

The catalysed reaction is 2,6-dioxo-6-phenylhexa-3-enoate + H2O = 2-oxopent-4-enoate + benzoate + H(+). Its pathway is xenobiotic degradation; biphenyl degradation; 2-hydroxy-2,4-pentadienoate and benzoate from biphenyl: step 4/4. Catalyzes an unusual C-C bond hydrolysis of 2-hydroxy-6-oxo-6-phenylhexa-2,4-dienoic acid (HOPDA) to produce benzoic acid and 2-hydroxy-2,4-pentadienoic acid (HPD). The polypeptide is 2-hydroxy-6-oxo-6-phenylhexa-2,4-dienoate hydrolase (Polaromonas naphthalenivorans (strain CJ2)).